A 150-amino-acid chain; its full sequence is D-aminoacyl-tRNA deacylase (150 aa).

The Gly-cisPro motif, important for rejection of L-amino acids motif lies at 136 to 137 (GP).

The protein belongs to the DTD family. As to quaternary structure, homodimer.

The protein localises to the cytoplasm. The enzyme catalyses glycyl-tRNA(Ala) + H2O = tRNA(Ala) + glycine + H(+). The catalysed reaction is a D-aminoacyl-tRNA + H2O = a tRNA + a D-alpha-amino acid + H(+). An aminoacyl-tRNA editing enzyme that deacylates mischarged D-aminoacyl-tRNAs. Also deacylates mischarged glycyl-tRNA(Ala), protecting cells against glycine mischarging by AlaRS. Acts via tRNA-based rather than protein-based catalysis; rejects L-amino acids rather than detecting D-amino acids in the active site. By recycling D-aminoacyl-tRNA to D-amino acids and free tRNA molecules, this enzyme counteracts the toxicity associated with the formation of D-aminoacyl-tRNA entities in vivo and helps enforce protein L-homochirality. This chain is D-aminoacyl-tRNA deacylase, found in Staphylococcus haemolyticus (strain JCSC1435).